The sequence spans 660 residues: Bifunctional polymyxin resistance protein ArnA (660 aa).

Residues 1–304 (MKAVVFAYHD…TLGLVEGSRL (304 aa)) form a formyltransferase ArnAFT region. The Proton donor; for formyltransferase activity role is filled by His-104. (6R)-10-formyltetrahydrofolate is bound by residues Arg-114 and 136 to 140 (VAKAD). Residues 314–660 (RRTRVLILGV…RTVDIVEKSS (347 aa)) form a dehydrogenase ArnADH region. NAD(+) is bound by residues Asp-347 and 368–369 (DI). UDP-alpha-D-glucuronate contacts are provided by residues Ala-393, Tyr-398, and 432-433 (TS). Glu-434 serves as the catalytic Proton acceptor; for decarboxylase activity. Residues Arg-460, Asn-492, 526-535 (KLIDGGKQKR), and Tyr-613 each bind UDP-alpha-D-glucuronate. The active-site Proton donor; for decarboxylase activity is the Arg-619.

In the N-terminal section; belongs to the Fmt family. UDP-L-Ara4N formyltransferase subfamily. The protein in the C-terminal section; belongs to the NAD(P)-dependent epimerase/dehydratase family. UDP-glucuronic acid decarboxylase subfamily. Homohexamer, formed by a dimer of trimers.

The catalysed reaction is UDP-alpha-D-glucuronate + NAD(+) = UDP-beta-L-threo-pentopyranos-4-ulose + CO2 + NADH. It catalyses the reaction UDP-4-amino-4-deoxy-beta-L-arabinose + (6R)-10-formyltetrahydrofolate = UDP-4-deoxy-4-formamido-beta-L-arabinose + (6S)-5,6,7,8-tetrahydrofolate + H(+). Its pathway is nucleotide-sugar biosynthesis; UDP-4-deoxy-4-formamido-beta-L-arabinose biosynthesis; UDP-4-deoxy-4-formamido-beta-L-arabinose from UDP-alpha-D-glucuronate: step 1/3. It functions in the pathway nucleotide-sugar biosynthesis; UDP-4-deoxy-4-formamido-beta-L-arabinose biosynthesis; UDP-4-deoxy-4-formamido-beta-L-arabinose from UDP-alpha-D-glucuronate: step 3/3. The protein operates within bacterial outer membrane biogenesis; lipopolysaccharide biosynthesis. Its function is as follows. Bifunctional enzyme that catalyzes the oxidative decarboxylation of UDP-glucuronic acid (UDP-GlcUA) to UDP-4-keto-arabinose (UDP-Ara4O) and the addition of a formyl group to UDP-4-amino-4-deoxy-L-arabinose (UDP-L-Ara4N) to form UDP-L-4-formamido-arabinose (UDP-L-Ara4FN). The modified arabinose is attached to lipid A and is required for resistance to polymyxin and cationic antimicrobial peptides. The chain is Bifunctional polymyxin resistance protein ArnA from Escherichia fergusonii (strain ATCC 35469 / DSM 13698 / CCUG 18766 / IAM 14443 / JCM 21226 / LMG 7866 / NBRC 102419 / NCTC 12128 / CDC 0568-73).